Reading from the N-terminus, the 184-residue chain is Gremlin-1 (184 aa).

Positions 1 to 24 (MNRTAYTVGALLLLLGTLLPTAEG) are cleaved as a signal peptide. Positions 23–77 (EGKKKGSQGAIPPPDKAQHNDSEQTQSPPQPGSRTRGRGQGRGTAMPGEEVLESS) are disordered. N-linked (GlcNAc...) asparagine glycosylation is present at Asn42. 4 disulfide bridges follow: Cys94–Cys144, Cys108–Cys158, Cys118–Cys176, and Cys122–Cys178. Positions 94 to 184 (CKTQPLKQTI…QCRCISIDLD (91 aa)) constitute a CTCK domain.

Belongs to the DAN family. Homodimer; can also form homooligomers. Interacts with BMP2; can form higher oligomers with BMP2. Interacts with SLIT1 and SLIT2 in a glycosylation-dependent manner. In terms of tissue distribution, highly expressed in spleen and to a lesser extent in lung, skeletal muscle and kidney. Expressed only in non-transformed cells or primary fibroblasts in culture but not in established transformed or tumor derived cell lines. Broadly expressed in limb bud mesenchyme but restricted to the distal limb bud mesenchyme and concentrated posteriorly. Expressed in ovary especially in granulosa cells of follicles of type 4.

It is found in the secreted. Functionally, cytokine that may play an important role during carcinogenesis and metanephric kidney organogenesis, as BMP a antagonist required for early limb outgrowth and patterning in maintaining the FGF4-SHH feedback loop. Down-regulates the BMP4 signaling in a dose-dependent manner. Antagonist of BMP2; inhibits BMP2-mediated differentiation of osteoblasts (in vitro). Acts as inhibitor of monocyte chemotaxis. This Mus musculus (Mouse) protein is Gremlin-1 (Grem1).